We begin with the raw amino-acid sequence, 177 residues long: Ribosome maturation factor RimP (177 aa).

Belongs to the RimP family.

It localises to the cytoplasm. Functionally, required for maturation of 30S ribosomal subunits. This chain is Ribosome maturation factor RimP, found in Mycobacterium marinum (strain ATCC BAA-535 / M).